The sequence spans 718 residues: Sec-independent protein translocase protein TatCt (718 aa).

A run of 8 helical transmembrane segments spans residues Val34–Trp54, Ile84–Ile104, Leu137–Leu157, Phe178–Gly198, Trp214–Pro231, Phe234–Ala254, Leu280–Val300, and Leu325–Val345. A disordered region spans residues Arg421–Thr451. The segment covering Ala425–Glu434 has biased composition (acidic residues). 6 consecutive transmembrane segments (helical) span residues Ala478–Thr498, Phe539–Ala559, Thr572–Tyr592, Phe621–Leu641, Glu661–Met681, and Phe682–Leu702.

The protein belongs to the TatC family. Forms a complex with TatA.

It is found in the cell membrane. Its function is as follows. Part of the twin-arginine translocation (Tat) system that transports large folded proteins containing a characteristic twin-arginine motif in their signal peptide across membranes. This chain is Sec-independent protein translocase protein TatCt, found in Haloferax volcanii (strain ATCC 29605 / DSM 3757 / JCM 8879 / NBRC 14742 / NCIMB 2012 / VKM B-1768 / DS2) (Halobacterium volcanii).